The primary structure comprises 596 residues: Elongation factor 4 (596 aa).

The tr-type G domain maps to 2–184 (KHIRNFSIIA…VIVAQIPPPE (183 aa)). GTP contacts are provided by residues 14–19 (DHGKST) and 131–134 (NKID).

This sequence belongs to the TRAFAC class translation factor GTPase superfamily. Classic translation factor GTPase family. LepA subfamily.

It localises to the cell inner membrane. The catalysed reaction is GTP + H2O = GDP + phosphate + H(+). In terms of biological role, required for accurate and efficient protein synthesis under certain stress conditions. May act as a fidelity factor of the translation reaction, by catalyzing a one-codon backward translocation of tRNAs on improperly translocated ribosomes. Back-translocation proceeds from a post-translocation (POST) complex to a pre-translocation (PRE) complex, thus giving elongation factor G a second chance to translocate the tRNAs correctly. Binds to ribosomes in a GTP-dependent manner. This chain is Elongation factor 4, found in Shewanella halifaxensis (strain HAW-EB4).